Reading from the N-terminus, the 399-residue chain is S-adenosylmethionine synthase (399 aa).

His-17 contributes to the ATP binding site. Residue Asp-19 coordinates Mg(2+). Glu-45 lines the K(+) pocket. 2 residues coordinate L-methionine: Glu-58 and Gln-101. The flexible loop stretch occupies residues 101-111 (QSADIAMGVDQ). ATP is bound by residues 177–179 (DGK), 244–245 (RF), Asp-253, 259–260 (RK), Ala-276, and Lys-280. Asp-253 serves as a coordination point for L-methionine. Lys-284 is an L-methionine binding site.

The protein belongs to the AdoMet synthase family. As to quaternary structure, homotetramer; dimer of dimers. Requires Mg(2+) as cofactor. K(+) is required as a cofactor.

Its subcellular location is the cytoplasm. The enzyme catalyses L-methionine + ATP + H2O = S-adenosyl-L-methionine + phosphate + diphosphate. It participates in amino-acid biosynthesis; S-adenosyl-L-methionine biosynthesis; S-adenosyl-L-methionine from L-methionine: step 1/1. Its function is as follows. Catalyzes the formation of S-adenosylmethionine (AdoMet) from methionine and ATP. The overall synthetic reaction is composed of two sequential steps, AdoMet formation and the subsequent tripolyphosphate hydrolysis which occurs prior to release of AdoMet from the enzyme. The sequence is that of S-adenosylmethionine synthase from Bacillus thuringiensis (strain Al Hakam).